The following is a 439-amino-acid chain: Xylose isomerase (439 aa).

Residues H101 and D104 contribute to the active site. E232, E268, H271, D296, D307, D309, and D339 together coordinate Mg(2+).

It belongs to the xylose isomerase family. As to quaternary structure, homotetramer. Mg(2+) serves as cofactor.

It is found in the cytoplasm. It carries out the reaction alpha-D-xylose = alpha-D-xylulofuranose. The sequence is that of Xylose isomerase (xylA) from Thermoanaerobacterium saccharolyticum.